The primary structure comprises 106 residues: Large ribosomal subunit protein uL24 (106 aa).

This sequence belongs to the universal ribosomal protein uL24 family. In terms of assembly, part of the 50S ribosomal subunit.

Its function is as follows. One of two assembly initiator proteins, it binds directly to the 5'-end of the 23S rRNA, where it nucleates assembly of the 50S subunit. Functionally, one of the proteins that surrounds the polypeptide exit tunnel on the outside of the subunit. This Orientia tsutsugamushi (strain Boryong) (Rickettsia tsutsugamushi) protein is Large ribosomal subunit protein uL24.